We begin with the raw amino-acid sequence, 589 residues long: Aspartate--tRNA ligase (589 aa).

Glutamate 175 is an L-aspartate binding site. Residues 199 to 202 (QLFK) form an aspartate region. Arginine 221 is a binding site for L-aspartate. ATP is bound by residues 221 to 223 (RDE) and glutamine 230. Histidine 449 is a binding site for L-aspartate. Glutamate 483 contacts ATP. Arginine 490 contacts L-aspartate. 535 to 538 (GLDR) provides a ligand contact to ATP.

It belongs to the class-II aminoacyl-tRNA synthetase family. Type 1 subfamily. Homodimer.

Its subcellular location is the cytoplasm. It carries out the reaction tRNA(Asp) + L-aspartate + ATP = L-aspartyl-tRNA(Asp) + AMP + diphosphate. Its function is as follows. Catalyzes the attachment of L-aspartate to tRNA(Asp) in a two-step reaction: L-aspartate is first activated by ATP to form Asp-AMP and then transferred to the acceptor end of tRNA(Asp). The polypeptide is Aspartate--tRNA ligase (Lysinibacillus sphaericus (strain C3-41)).